The primary structure comprises 363 residues: Jasmonate-induced oxygenase 3 (363 aa).

In terms of domain architecture, Fe2OG dioxygenase spans 210–312 (ESGGCLRVNY…RLSLAFFYNP (103 aa)). Arg216 lines the jasmonate pocket. 2-oxoglutarate-binding residues include Asn218 and Tyr220. Fe cation contacts are provided by His235, Asp237, and His293. Residues Arg303 and Ser305 each contribute to the 2-oxoglutarate site. Jasmonate-binding residues include Arg342 and Arg346.

Belongs to the iron/ascorbate-dependent oxidoreductase family. L-ascorbate is required as a cofactor. Fe(2+) serves as cofactor.

The catalysed reaction is jasmonate + 2-oxoglutarate + O2 = (1R,2R)-12-hydroxyjasmonate + succinate + CO2. 2-oxoglutarate-dependent dioxygenase involved in the oxidation of jasmonate (JA), a stress-induced phytohormone synthesized in response to attack by pathogens and herbivores, which triggers the activation of defense responses via the JA-mediated signaling pathway. Converts JA to 12-hydroxyjasmonate (12OH-JA), an inactive form of JA. Is specific to free JA, and cannot oxidize the bioactive form jasmonoyl-L-isoleucine (JA-Ile) or other JA-amino acid conjugates. Prevents over-accumulation of JA and indirectly its bioactive form JA-Ile under stress response. Acts as a negative regulator of JA-mediated defense signaling, by contributing to 12OH-JA accumulation, which represses JA defense responses upon infection by the fungal pathogen Botrytis cinerea. Acts as a negative regulator of JA-mediated defense responses upon infestation by the herbivorous caterpillar Mamestra brassicae. The polypeptide is Jasmonate-induced oxygenase 3 (Arabidopsis thaliana (Mouse-ear cress)).